A 339-amino-acid chain; its full sequence is Serine racemase (339 aa).

A Mg(2+)-binding site is contributed by E13. ATP contacts are provided by S31, S32, I33, K51, and T52. K56 (proton acceptor) is an active-site residue. At K56 the chain carries N6-(pyridoxal phosphate)lysine. A Ca(2+)-binding site is contributed by P69. At T71 the chain carries Phosphothreonine. T81 is a Ca(2+) binding site. The active-site Proton acceptor is the S84. N86 contributes to the pyridoxal 5'-phosphate binding site. Q89 contacts ATP. C113 carries the S-nitrosocysteine modification. Y121 serves as a coordination point for ATP. Position 154 (N154) interacts with pyridoxal 5'-phosphate. D178 contacts Mg(2+). G185, G186, G187, G188, and M189 together coordinate pyridoxal 5'-phosphate. Residues E210, A214, D216, and N247 each contribute to the Mg(2+) site. Ca(2+) is bound by residues E210, A214, D216, and N247. 3 residues coordinate Mn(2+): E210, A214, and D216. Residue K279 coordinates ATP. Pyridoxal 5'-phosphate is bound at residue S313. N316 serves as a coordination point for ATP.

It belongs to the serine/threonine dehydratase family. As to quaternary structure, homodimer. The cofactor is Mg(2+). Mn(2+) serves as cofactor. It depends on Ca(2+) as a cofactor. Requires pyridoxal 5'-phosphate as cofactor. Post-translationally, S-nitrosylated, leading to decrease the enzyme activity. As to expression, expressed in the hippocampus (at protein level). Expressed in the small intestine.

It carries out the reaction L-serine = D-serine. It catalyses the reaction D-serine = pyruvate + NH4(+). The catalysed reaction is L-serine = pyruvate + NH4(+). Its activity is regulated as follows. Allosterically activated by magnesium, and possibly also other divalent metal cations. Allosterically activated by ATP, ADP or GTP. Functionally, catalyzes the synthesis of D-serine from L-serine. D-serine is a key coagonist with glutamate at NMDA receptors. Has dehydratase activity towards both L-serine and D-serine. In Mus musculus (Mouse), this protein is Serine racemase (Srr).